Reading from the N-terminus, the 419-residue chain is Subtilisin-like protease 2 (419 aa).

Residues 1 to 16 (MQLLNFGLLLLPFVAG) form the signal peptide. The propeptide occupies 17 to 122 (DLAPQPEPLL…VHPDQHVYLA (106 aa)). An Inhibitor I9 domain is found at 36-122 (QYIVTLKEGL…VHPDQHVYLA (87 aa)). One can recognise a Peptidase S8 domain in the interval 131-419 (RWGLGYMSSK…IQERKFKLPK (289 aa)). Active-site charge relay system residues include Asp-169 and His-201. N-linked (GlcNAc...) asparagine glycans are attached at residues Asn-248, Asn-261, and Asn-348. Ser-357 acts as the Charge relay system in catalysis. An N-linked (GlcNAc...) asparagine glycan is attached at Asn-388.

The protein belongs to the peptidase S8 family.

Its subcellular location is the secreted. Secreted subtilisin-like serine protease with keratinolytic activity that contributes to pathogenicity. The polypeptide is Subtilisin-like protease 2 (SUB2) (Arthroderma benhamiae (Trichophyton mentagrophytes)).